Reading from the N-terminus, the 56-residue chain is Conotoxin Cal6.41c (56 aa).

Residues 1–23 (MSGSGAMLLGLLILVAMATSLDT) form the signal peptide. Disulfide bonds link Cys-27-Cys-41, Cys-33-Cys-50, and Cys-40-Cys-54.

As to expression, expressed by the venom duct.

The protein resides in the secreted. Functionally, probable neurotoxin. This is Conotoxin Cal6.41c from Californiconus californicus (California cone).